The primary structure comprises 120 residues: Small ribosomal subunit protein bS16 (120 aa).

A disordered region spans residues 81–120; it reads GLAKRPTRNNPQKAEPGEKAKERAAKRAEKAAAPAEDAAA. Residues 95-110 are compositionally biased toward basic and acidic residues; that stretch reads EPGEKAKERAAKRAEK. Positions 111 to 120 are enriched in low complexity; that stretch reads AAAPAEDAAA.

The protein belongs to the bacterial ribosomal protein bS16 family.

In Methylorubrum extorquens (strain CM4 / NCIMB 13688) (Methylobacterium extorquens), this protein is Small ribosomal subunit protein bS16.